The primary structure comprises 440 residues: Glutamyl-tRNA reductase (440 aa).

Substrate contacts are provided by residues 40–43, Ser100, 105–107, and Gln111; these read TCNR and ERE. Residue Cys41 is the Nucleophile of the active site. 181 to 186 contacts NADP(+); that stretch reads GTGAYA.

Belongs to the glutamyl-tRNA reductase family. As to quaternary structure, homodimer.

The catalysed reaction is (S)-4-amino-5-oxopentanoate + tRNA(Glu) + NADP(+) = L-glutamyl-tRNA(Glu) + NADPH + H(+). Its pathway is porphyrin-containing compound metabolism; protoporphyrin-IX biosynthesis; 5-aminolevulinate from L-glutamyl-tRNA(Glu): step 1/2. Catalyzes the NADPH-dependent reduction of glutamyl-tRNA(Glu) to glutamate 1-semialdehyde (GSA). The polypeptide is Glutamyl-tRNA reductase (Renibacterium salmoninarum (strain ATCC 33209 / DSM 20767 / JCM 11484 / NBRC 15589 / NCIMB 2235)).